Reading from the N-terminus, the 371-residue chain is MLKFTLHKKDGLARRGTLELNHGKIETPVFMPVGTYGSVKAMNPQNLHDIKAQIILGNTYHLWLRPGLEVVEQFGGLHGFIGWDKPILTDSGGFQVFSLSDMRKLTEEGCTFKSPINGDKLFLSPEISMKIQTVLNSDIAMQLDECTPGETTREQARKSLQMSLRWAERSKKAFEDLKNPNALFGIVQGAMYEDLREESLRGLEEFDFPGLAVGGLSVGEPKPEMYRMLHAVGPILPEHKPHYLMGVGTPEDLVYGVAHGIDMFDCVMPTRNARNGWLFTRFGDLKIKNAKHKLDKRPIDESCTCYACQNFSRAYLHHLHRAGEILGAQLNTIHNLHFYQVIMAEMREAVEQGKFADWQAQFHENRARGVD.

Asp90 functions as the Proton acceptor in the catalytic mechanism. Residues 90–94 (DSGGF), Asp144, Gln188, and Gly215 each bind substrate. Positions 246 to 252 (GVGTPED) are RNA binding. Catalysis depends on Asp265, which acts as the Nucleophile. Residues 270–274 (TRNAR) form an RNA binding; important for wobble base 34 recognition region. Residues Cys303, Cys305, Cys308, and His334 each contribute to the Zn(2+) site.

It belongs to the queuine tRNA-ribosyltransferase family. Homodimer. Within each dimer, one monomer is responsible for RNA recognition and catalysis, while the other monomer binds to the replacement base PreQ1. Zn(2+) is required as a cofactor.

The enzyme catalyses 7-aminomethyl-7-carbaguanine + guanosine(34) in tRNA = 7-aminomethyl-7-carbaguanosine(34) in tRNA + guanine. It functions in the pathway tRNA modification; tRNA-queuosine biosynthesis. Functionally, catalyzes the base-exchange of a guanine (G) residue with the queuine precursor 7-aminomethyl-7-deazaguanine (PreQ1) at position 34 (anticodon wobble position) in tRNAs with GU(N) anticodons (tRNA-Asp, -Asn, -His and -Tyr). Catalysis occurs through a double-displacement mechanism. The nucleophile active site attacks the C1' of nucleotide 34 to detach the guanine base from the RNA, forming a covalent enzyme-RNA intermediate. The proton acceptor active site deprotonates the incoming PreQ1, allowing a nucleophilic attack on the C1' of the ribose to form the product. After dissociation, two additional enzymatic reactions on the tRNA convert PreQ1 to queuine (Q), resulting in the hypermodified nucleoside queuosine (7-(((4,5-cis-dihydroxy-2-cyclopenten-1-yl)amino)methyl)-7-deazaguanosine). In Neisseria gonorrhoeae (strain NCCP11945), this protein is Queuine tRNA-ribosyltransferase.